A 424-amino-acid chain; its full sequence is Acetyl-CoA acetyltransferase, mitochondrial (424 aa).

Residues 1–30 (MAALVALHGVVRRPLLRGLLQEVRCLERSY) constitute a mitochondrion transit peptide. An N6-acetyllysine; alternate modification is found at K63. At K63 the chain carries N6-succinyllysine; alternate. K75 carries the N6-succinyllysine modification. C123 functions as the Acyl-thioester intermediate in the catalytic mechanism. N6-acetyllysine; alternate occurs at positions 171, 178, 187, and 199. 4 positions are modified to N6-succinyllysine; alternate: K171, K178, K187, and K199. S204 carries the phosphoserine modification. Y216 is a CoA binding site. Y216 serves as a coordination point for K(+). Residues K220 and K227 each carry the N6-acetyllysine; alternate modification. N6-succinyllysine; alternate occurs at positions 220 and 227. K240 bears the N6-succinyllysine mark. K242 is subject to N6-acetyllysine; alternate. Residue K242 is modified to N6-succinyllysine; alternate. N6-acetyllysine occurs at positions 248 and 254. Residues 255–257 (RVD) and K260 contribute to the CoA site. K260 carries the post-translational modification N6-acetyllysine; alternate. An N6-succinyllysine; alternate modification is found at K260. An N6-succinyllysine mark is found at K263 and K265. K270 bears the N6-acetyllysine mark. K(+) contacts are provided by A277, A278, and A280. CoA is bound at residue S281. K335 carries the N6-acetyllysine modification. Position 378 (V378) interacts with K(+). The active-site Proton donor/acceptor is the C410.

The protein belongs to the thiolase-like superfamily. Thiolase family. As to quaternary structure, homotetramer. In terms of processing, succinylation at Lys-265, adjacent to a coenzyme A binding site. Desuccinylated by SIRT5.

Its subcellular location is the mitochondrion. The catalysed reaction is 2 acetyl-CoA = acetoacetyl-CoA + CoA. It catalyses the reaction propanoyl-CoA + acetyl-CoA = 2-methyl-3-oxobutanoyl-CoA + CoA. It functions in the pathway lipid metabolism; fatty acid beta-oxidation. Its activity is regulated as follows. Activated by potassium ions, but not sodium ions. Its function is as follows. This is one of the enzymes that catalyzes the last step of the mitochondrial beta-oxidation pathway, an aerobic process breaking down fatty acids into acetyl-CoA. Using free coenzyme A/CoA, catalyzes the thiolytic cleavage of medium- to long-chain 3-oxoacyl-CoAs into acetyl-CoA and a fatty acyl-CoA shortened by two carbon atoms. The activity of the enzyme is reversible and it can also catalyze the condensation of two acetyl-CoA molecules into acetoacetyl-CoA. Thereby, it plays a major role in ketone body metabolism. The protein is Acetyl-CoA acetyltransferase, mitochondrial (Acat1) of Mus musculus (Mouse).